The sequence spans 56 residues: Ovomucoid (56 aa).

The 51-residue stretch at 6–56 (VDCSEYPKPECTAEERPICGSDNKTYGNKCNFCNAVVESNGTLTLRNFGKC) folds into the Kazal-like domain. Disulfide bonds link C8–C38, C16–C35, and C24–C56. N-linked (GlcNAc...) asparagine glycosylation occurs at N45.

It is found in the secreted. This is Ovomucoid from Bambusicola thoracicus (Chinese bamboo-partridge).